We begin with the raw amino-acid sequence, 131 residues long: UPF0102 protein AZC_4471 (131 aa).

It belongs to the UPF0102 family.

The protein is UPF0102 protein AZC_4471 of Azorhizobium caulinodans (strain ATCC 43989 / DSM 5975 / JCM 20966 / LMG 6465 / NBRC 14845 / NCIMB 13405 / ORS 571).